We begin with the raw amino-acid sequence, 156 residues long: MIIRKFSSKDLDAVEEIEREAFKTPYPTSLILGFWSMYPNCFYVAEIDGRVVGYILGSMDWGNGHIISLAVKKECRGLGIGTALLKTLENYYFNIANCNYIVLEVRVSNVLARRFYYRMGYRDRKLLPKYYEDGEDAILMIKKKPNAKGPLIITLW.

Residues 1–145 (MIIRKFSSKD…DAILMIKKKP (145 aa)) form the N-acetyltransferase domain.

Belongs to the acetyltransferase family.

It localises to the cytoplasm. This is an uncharacterized protein from Methanocaldococcus jannaschii (strain ATCC 43067 / DSM 2661 / JAL-1 / JCM 10045 / NBRC 100440) (Methanococcus jannaschii).